Reading from the N-terminus, the 262-residue chain is Elongator complex protein 5 (262 aa).

2 disordered regions span residues Thr181–Glu214 and Pro229–Ile262. The segment covering Ala200–Phe211 has biased composition (polar residues). Acidic residues predominate over residues Asp246–Ile262.

It belongs to the ELP5 family. Component of the elongator complex composed of Elp1, Elp2, Elp3, Elp4, Elp5 and Elp6. The elongator complex associates with and stabilizes microtubules; efficient interaction requires the full complex.

It is found in the cytoplasm. Its subcellular location is the nucleus. It localises to the cytoskeleton. The protein localises to the spindle. Its pathway is tRNA modification; 5-methoxycarbonylmethyl-2-thiouridine-tRNA biosynthesis. Its function is as follows. Component of the elongator complex, which is required for multiple tRNA modifications, including mcm5U (5-methoxycarbonylmethyl uridine), mcm5s2U (5-methoxycarbonylmethyl-2-thiouridine), and ncm5U (5-carbamoylmethyl uridine). The elongator complex catalyzes the formation of carboxymethyluridine in the wobble base at position 34 in tRNAs. Binding by the elongator complex stabilizes microtubules and promotes their growth. This induces central spindle asymmetry, promoting polarized signaling endosome trafficking during asymmetric cell division and cell fate assignation of sensory organ precursor cells. This is Elongator complex protein 5 from Drosophila melanogaster (Fruit fly).